Here is a 156-residue protein sequence, read N- to C-terminus: Ribosomal RNA large subunit methyltransferase H (156 aa).

S-adenosyl-L-methionine-binding positions include L73, G104, and 123–128 (LSSLTL).

This sequence belongs to the RNA methyltransferase RlmH family. In terms of assembly, homodimer.

The protein localises to the cytoplasm. The catalysed reaction is pseudouridine(1915) in 23S rRNA + S-adenosyl-L-methionine = N(3)-methylpseudouridine(1915) in 23S rRNA + S-adenosyl-L-homocysteine + H(+). In terms of biological role, specifically methylates the pseudouridine at position 1915 (m3Psi1915) in 23S rRNA. The polypeptide is Ribosomal RNA large subunit methyltransferase H (Ralstonia pickettii (strain 12J)).